The following is a 403-amino-acid chain: Tubby-like F-box protein 6 (403 aa).

The 56-residue stretch at 50–105 (SCWAQLPPELLREVLVRIEESEVWWPSRRDVVACAGVCRSWRGITKEIVRVPEASG) folds into the F-box domain.

It belongs to the TUB family. As to expression, ubiquitous.

In Oryza sativa subsp. japonica (Rice), this protein is Tubby-like F-box protein 6 (TULP6).